We begin with the raw amino-acid sequence, 366 residues long: Galactoside alpha-(1,2)-fucosyltransferase 1 (366 aa).

Topologically, residues 1–8 (MWPLSHRH) are cytoplasmic. Residues 9 to 25 (LCLAFLLVCVLSAISFF) traverse the membrane as a helical; Signal-anchor for type II membrane protein segment. Topologically, residues 26–366 (LHVHQDSFRH…LSPLWTLAEP (341 aa)) are lumenal. N-linked (GlcNAc...) asparagine glycosylation is found at N66, N302, and N328.

It belongs to the glycosyltransferase 11 family.

The protein localises to the golgi apparatus. The protein resides in the golgi stack membrane. It catalyses the reaction a beta-D-galactosyl-(1-&gt;4)-N-acetyl-beta-D-glucosaminyl derivative + GDP-beta-L-fucose = an alpha-L-Fuc-(1-&gt;2)-beta-D-Gal-(1-&gt;4)-beta-D-GlcNAc derivative + GDP + H(+). It carries out the reaction a ganglioside GA1 + GDP-beta-L-fucose = a ganglioside Fuc-GA1 + GDP + H(+). The catalysed reaction is a beta-D-Gal-(1-&gt;3)-beta-D-GlcNAc-(1-&gt;3)-beta-D-Gal-(1-&gt;4)-beta-D-Glc-(1&lt;-&gt;1')-Cer(d18:1(4E)) + GDP-beta-L-fucose = alpha-L-fucosyl-(1-&gt;2)- beta-D-galactosyl-(1-&gt;3)-N-acetyl-beta-D-glucosaminyl-(1-&gt;3)-beta-D-galactosyl-(1-&gt;4)-beta-D-glucosyl-(1&lt;-&gt;1')-N-acylsphing-4-enine + GDP + H(+). The enzyme catalyses a neolactoside nLc4Cer(d18:1(4E)) + GDP-beta-L-fucose = a neolactoside IV(2)-alpha-Fuc-nLc4Cer(d18:1(4E)) + GDP + H(+). It catalyses the reaction a ganglioside GM1 + GDP-beta-L-fucose = a ganglioside Fuc-GM1 + GDP + H(+). It carries out the reaction beta-D-galactosyl-(1-&gt;3)-N-acetyl-D-galactosamine + GDP-beta-L-fucose = alpha-L-fucosyl-(1-&gt;2)-beta-D-galactosyl-(1-&gt;3)-N-acetyl-D-galactosamine + GDP + H(+). It functions in the pathway protein modification; protein glycosylation. Catalyzes the transfer of L-fucose, from a guanosine diphosphate-beta-L-fucose, to the terminal galactose residue of glycoconjugates through an alpha(1,2) linkage leading to H antigen synthesis that is an intermediate substrate in the synthesis of ABO blood group antigens. H antigen is essential for maturation of the glomerular layer of the main olfactory bulb, in cell migration and early cell-cell contacts during tumor associated angiogenesis. Preferentially fucosylates soluble lactose and to a lesser extent fucosylates glycolipids gangliosides GA1 and GM1a. This chain is Galactoside alpha-(1,2)-fucosyltransferase 1, found in Alouatta caraya (Black howler monkey).